Consider the following 213-residue polypeptide: Small ribosomal subunit protein uS4 (213 aa).

An S4 RNA-binding domain is found at 97 to 165 (RRLDNVVYRM…AKEQLRIKNA (69 aa)).

Belongs to the universal ribosomal protein uS4 family. In terms of assembly, part of the 30S ribosomal subunit. Contacts protein S5. The interaction surface between S4 and S5 is involved in control of translational fidelity.

Functionally, one of the primary rRNA binding proteins, it binds directly to 16S rRNA where it nucleates assembly of the body of the 30S subunit. With S5 and S12 plays an important role in translational accuracy. In Psychrobacter sp. (strain PRwf-1), this protein is Small ribosomal subunit protein uS4.